Here is a 112-residue protein sequence, read N- to C-terminus: MLVLRSAALFVAAALFEIGGAWLVWQGVREHRGWLWIGAGVMALGVYGFVATLQPDAEFGRILAAYGGVFVAGSLAWGMVADGYRPDRWDVTGALICLAGMTVIMYAPRGGN.

4 helical membrane passes run 8-28 (ALFVAAALFEIGGAWLVWQGV), 33-53 (GWLWIGAGVMALGVYGFVATL), 62-82 (ILAAYGGVFVAGSLAWGMVAD), and 91-111 (VTGALICLAGMTVIMYAPRGG).

Belongs to the UPF0060 family.

It localises to the cell membrane. In Streptomyces avermitilis (strain ATCC 31267 / DSM 46492 / JCM 5070 / NBRC 14893 / NCIMB 12804 / NRRL 8165 / MA-4680), this protein is UPF0060 membrane protein SAV_4756.